The sequence spans 588 residues: Aspartate--tRNA ligase (588 aa).

Residue glutamate 177 participates in L-aspartate binding. Residues 201–204 (QLFK) are aspartate. L-aspartate is bound at residue arginine 223. ATP-binding positions include 223 to 225 (RDE) and glutamine 232. An L-aspartate-binding site is contributed by histidine 451. An ATP-binding site is contributed by glutamate 485. Position 492 (arginine 492) interacts with L-aspartate. 537 to 540 (GLDR) lines the ATP pocket.

Belongs to the class-II aminoacyl-tRNA synthetase family. Type 1 subfamily. In terms of assembly, homodimer.

It is found in the cytoplasm. The catalysed reaction is tRNA(Asp) + L-aspartate + ATP = L-aspartyl-tRNA(Asp) + AMP + diphosphate. Its function is as follows. Catalyzes the attachment of L-aspartate to tRNA(Asp) in a two-step reaction: L-aspartate is first activated by ATP to form Asp-AMP and then transferred to the acceptor end of tRNA(Asp). The protein is Aspartate--tRNA ligase of Staphylococcus aureus (strain NCTC 8325 / PS 47).